A 1124-amino-acid polypeptide reads, in one-letter code: Putative DNA mismatch repair protein mutS homolog L359 (1124 aa).

779–786 provides a ligand contact to ATP; the sequence is SNNWAGKS.

The protein belongs to the DNA mismatch repair MutS family.

Functionally, may be involved in DNA-mismatch repair. The chain is Putative DNA mismatch repair protein mutS homolog L359 from Acanthamoeba polyphaga (Amoeba).